The following is an 83-amino-acid chain: Cytochrome b559 subunit alpha (83 aa).

A helical membrane pass occupies residues 21–35 (IIHSITIPSLFIAGW). Position 23 (H23) interacts with heme.

Heterodimer of an alpha subunit and a beta subunit. PSII is composed of 1 copy each of membrane proteins PsbA, PsbB, PsbC, PsbD, PsbE, PsbF, PsbH, PsbI, PsbJ, PsbK, PsbL, PsbM, PsbT, PsbX, PsbY, PsbZ, Psb30/Ycf12, at least 3 peripheral proteins of the oxygen-evolving complex and a large number of cofactors. It forms dimeric complexes. It depends on heme b as a cofactor.

It is found in the plastid. The protein localises to the chloroplast thylakoid membrane. Its function is as follows. This b-type cytochrome is tightly associated with the reaction center of photosystem II (PSII). PSII is a light-driven water:plastoquinone oxidoreductase that uses light energy to abstract electrons from H(2)O, generating O(2) and a proton gradient subsequently used for ATP formation. It consists of a core antenna complex that captures photons, and an electron transfer chain that converts photonic excitation into a charge separation. The polypeptide is Cytochrome b559 subunit alpha (Pisum sativum (Garden pea)).